The following is a 79-amino-acid chain: Acyl carrier protein (79 aa).

The 76-residue stretch at 2-77 (ESIEQRVKKI…QAIDYINSHG (76 aa)) folds into the Carrier domain. Ser37 bears the O-(pantetheine 4'-phosphoryl)serine mark.

The protein belongs to the acyl carrier protein (ACP) family. In terms of processing, 4'-phosphopantetheine is transferred from CoA to a specific serine of apo-ACP by AcpS. This modification is essential for activity because fatty acids are bound in thioester linkage to the sulfhydryl of the prosthetic group.

The protein localises to the cytoplasm. It participates in lipid metabolism; fatty acid biosynthesis. In terms of biological role, carrier of the growing fatty acid chain in fatty acid biosynthesis. In Bordetella avium (strain 197N), this protein is Acyl carrier protein.